A 260-amino-acid polypeptide reads, in one-letter code: MALRRPMVAGNWKMNGSAALAQELFKKFASKLQNDSAEVVLCPPSIYLESVRQLLEANKEALDGSLVRMGAQNLSQHDFGAYTGEVSGQMLKDSGCRYVIIGHSERRRMYGETSNIVAEKFAAAQKHGLTPILCVGESGPAREARRTFEVIAEELDIVIQKNGTMAFDNAIIAYEPLWAVGTGKSATPEQAQEVHAFIRKRLSEVSPFIGENIRILYGGSVTPSNAADLFAQPDVDGGLIGGASLNSSEFLSLCTIAMSA.

Position 11 to 13 (11 to 13) interacts with substrate; sequence NWK. The Electrophile role is filled by histidine 103. The active-site Proton acceptor is glutamate 175. Substrate-binding positions include glycine 181, serine 220, and 241–242; that span reads GG.

It belongs to the triosephosphate isomerase family. Homodimer.

It is found in the cytoplasm. The enzyme catalyses D-glyceraldehyde 3-phosphate = dihydroxyacetone phosphate. Its pathway is carbohydrate biosynthesis; gluconeogenesis. The protein operates within carbohydrate degradation; glycolysis; D-glyceraldehyde 3-phosphate from glycerone phosphate: step 1/1. Functionally, involved in the gluconeogenesis. Catalyzes stereospecifically the conversion of dihydroxyacetone phosphate (DHAP) to D-glyceraldehyde-3-phosphate (G3P). The sequence is that of Triosephosphate isomerase from Shewanella sp. (strain W3-18-1).